The sequence spans 1055 residues: Kinesin-like protein KIN-7D, mitochondrial (1055 aa).

A compositionally biased stretch (low complexity) spans 1 to 23; it reads MASSSSRTRSSRPPSPASSTSSS. Residues 1–36 form a disordered region; sequence MASSSSRTRSSRPPSPASSTSSSHLSNRLIPRSNST. A mitochondrion-targeting transit peptide spans 1–96; that stretch reads MASSSSRTRS…PMDDTISSER (96 aa). Residues 98–415 enclose the Kinesin motor domain; the sequence is SISVTVRFRP…LKFASRAKSI (318 aa). Residue 178–185 coordinates ATP; sequence GVTSSGKT. 3 coiled-coil regions span residues 419 to 503, 618 to 653, and 694 to 823; these read ASRN…ILVS, PENS…GEAS, and LQEK…LAQT. Residues 826-856 are disordered; it reads PMNGVNRKYNDGARSGRKGRISSSRSSGDEF. Residues 880–911 are a coiled coil; that stretch reads LESALAEKEFIEDEYRKKAEEAKRREEALEND. The tract at residues 926 to 963 is disordered; the sequence is NGALPEPNGTDPGRELEKSQSHAVLKERQVSSAPRQPE. Residues 937-954 are compositionally biased toward basic and acidic residues; it reads PGRELEKSQSHAVLKERQ. The segment at 1008–1043 adopts an RING-type zinc-finger fold; sequence CKVCFESPTAAILLPCRHFCLCKSCSLACSECPICR.

This sequence belongs to the TRAFAC class myosin-kinesin ATPase superfamily. Kinesin family. KIN-7 subfamily.

The protein resides in the mitochondrion. The polypeptide is Kinesin-like protein KIN-7D, mitochondrial (Arabidopsis thaliana (Mouse-ear cress)).